The following is a 950-amino-acid chain: Protocadherin alpha-9 (950 aa).

The N-terminal stretch at 1-29 (MLYSSRGDPEGQPLLLSLLILAMWVVGSG) is a signal peptide. 6 consecutive Cadherin domains span residues 30–133 (QLHY…PPVF), 134–242 (PATQ…APVF), 243–350 (DRTL…APQL), 351–455 (TIKT…APAF), 456–565 (AQSE…APAL), and 588–678 (GVVV…APKS). The Extracellular segment spans residues 30–697 (QLHYSVPEEA…GPEVTLVDVN (668 aa)). N-linked (GlcNAc...) asparagine glycans are attached at residues Asn254 and Asn265. N-linked (GlcNAc...) asparagine glycosylation occurs at Asn548. The helical transmembrane segment at 698 to 718 (VYLIIAICAVSSLLVLTLLLY) threads the bilayer. The Cytoplasmic portion of the chain corresponds to 719-950 (TVLRCSAMPT…GNSTTDNSDQ (232 aa)). Residues 734 to 737 (PGKP) form a PXXP 1 repeat. Residues 734-894 (PGKPTLVCSS…PDKFIIPGSP (161 aa)) form a 5 X 4 AA repeats of P-X-X-P region. 3 disordered regions span residues 770–808 (MAFS…DWRY), 827–856 (ILRA…EVSP), and 871–950 (YGPG…NSDQ). Residues 789–798 (PSASSDSTGK) show a composition bias toward polar residues. PXXP repeat units lie at residues 799–802 (PRQP), 832–835 (PGGP), 873–876 (PGNP), and 891–894 (PGSP). A compositionally biased stretch (basic and acidic residues) spans 909–923 (DKSDFITFGKKEETK).

It is found in the cell membrane. Potential calcium-dependent cell-adhesion protein. May be involved in the establishment and maintenance of specific neuronal connections in the brain. The sequence is that of Protocadherin alpha-9 (PCDHA9) from Homo sapiens (Human).